A 570-amino-acid chain; its full sequence is Frizzled-2 (570 aa).

Residues 1-28 form the signal peptide; it reads MRARSALPRSALPRLLLPLLLLPAAGPA. At 29 to 252 the chain is on the extracellular side; the sequence is QFHGEKGISI…HHHTRFARLW (224 aa). The 120-residue stretch at 39 to 158 folds into the FZ domain; it reads PDHGFCQPIS…HGAEQICVGQ (120 aa). 5 disulfides stabilise this stretch: Cys44-Cys105, Cys52-Cys98, Cys89-Cys126, Cys115-Cys155, and Cys119-Cys143. The N-linked (GlcNAc...) asparagine glycan is linked to Asn58. N-linked (GlcNAc...) asparagine glycosylation is present at Asn159. The disordered stretch occupies residues 166–194; sequence PALLTTAPPSGLQPGAGGTPGGPGGGGAP. Over residues 179 to 193 the composition is skewed to gly residues; the sequence is PGAGGTPGGPGGGGA. The chain crosses the membrane as a helical span at residues 253–273; the sequence is ILTWSVLCCASTFFTVTTSLV. The Cytoplasmic portion of the chain corresponds to 274-284; that stretch reads AMQRFRYPERP. A helical transmembrane segment spans residues 285–305; the sequence is IIFLSGCYTMVSVAYIAGFVL. Topologically, residues 306–332 are extracellular; that stretch reads QERVVCNERFSEDGYRTVGQGTKKEGC. A helical membrane pass occupies residues 333–353; the sequence is TILFMMLYFFSMASSIWWVIL. Over 354 to 375 the chain is Cytoplasmic; the sequence is SLTWFLAAGMKWGHAAIEANSQ. The chain crosses the membrane as a helical span at residues 376–396; that stretch reads YFHLAAWAVPAVKTITILAMG. Over 397-419 the chain is Extracellular; that stretch reads QIDGDLLSGVCFVGLNRLDPLRG. A helical membrane pass occupies residues 420 to 440; that stretch reads FVLAPLFVYLFIGTSFLLAGF. At 441–466 the chain is on the cytoplasmic side; the sequence is VSLFRIRTIMKHDGTKTEPLERLMVR. Residues 467-487 form a helical membrane-spanning segment; sequence IGVFSVLYTVPATIVIACYFY. At 488 to 524 the chain is on the extracellular side; it reads EQAFREHWERSWVSQHCKSLAIPCPAHYTPRTSPDFT. The helical transmembrane segment at 525 to 545 threads the bilayer; that stretch reads VYMIKYLMTLIVGITSGFWIW. The Cytoplasmic portion of the chain corresponds to 546-570; sequence SGKTLHSWRKFYTRLTNSRHGETTV. The Lys-Thr-X-X-X-Trp motif, mediates interaction with the PDZ domain of Dvl family members signature appears at 548–553; the sequence is KTLHSW. A PDZ-binding motif is present at residues 568–570; it reads TTV.

The protein belongs to the G-protein coupled receptor Fz/Smo family. Ubiquitinated by ZNRF3, leading to its degradation by the proteasome. Widely expressed. Most abundant in kidney, liver, uterus, ovary and heart. Lower levels seen in brain and intestine. Extremely low in calvaria, mammary glands and testis.

It localises to the membrane. It is found in the cell membrane. Receptor for Wnt proteins. Most of frizzled receptors are coupled to the beta-catenin canonical signaling pathway, which leads to the activation of disheveled proteins, inhibition of GSK-3 kinase, nuclear accumulation of beta-catenin and activation of Wnt target genes. A second signaling pathway involving PKC and calcium fluxes has been seen for some family members, but it is not yet clear if it represents a distinct pathway or if it can be integrated in the canonical pathway, as PKC seems to be required for Wnt-mediated inactivation of GSK-3 kinase. Both pathways seem to involve interactions with G-proteins. May be involved in transduction and intercellular transmission of polarity information during tissue morphogenesis and/or in differentiated tissues. Activation by Wnt5A stimulates PKC activity via a G-protein-dependent mechanism. This chain is Frizzled-2 (Fzd2), found in Rattus norvegicus (Rat).